The primary structure comprises 114 residues: Astacin-like metalloprotease toxin 4 (114 aa).

Residues 1–114 (RETNENDYVD…GLLCLFKGSV (114 aa)) enclose the Peptidase M12A domain. A disulfide bridge links Cys-17 with Cys-38. His-46 contributes to the Zn(2+) binding site. Glu-47 is an active-site residue. His-50 and His-56 together coordinate Zn(2+). The N-linked (GlcNAc...) asparagine glycan is linked to Asn-88.

Monomer. Zn(2+) is required as a cofactor. Expressed by the venom gland.

It is found in the secreted. Inhibited by 1,10-phenanthroline. Functionally, zinc metalloprotease. Provoques deadhesion of endothelial cells from cell cultures, and also degradation of fibronectin, fibrinogen and gelatin in vitro. Its role in the venom is not fully understood but it might act as a spreading factor that facilitates diffusion of other venom toxins. Alternatively, it might be involved in the proteolytic processing of other venom toxins or it might play a role in extra-oral digestion of prey. This is Astacin-like metalloprotease toxin 4 from Loxosceles laeta (South American recluse spider).